The chain runs to 554 residues: Membrane protein insertase YidC (554 aa).

5 helical membrane-spanning segments follow: residues 7-24, 362-382, 436-456, 475-495, and 510-530; these read VLWVIFFMSAVMLYDNWQ, FVGNWGWAIVLLTVLIKAVFF, LPVVIQIPVFISLYWVLLASV, PFFILPVLMAVSMFVQTSLNP, and PIAFSVMFFFFPAGLVLYYVV.

The protein belongs to the OXA1/ALB3/YidC family. Type 1 subfamily. In terms of assembly, interacts with the Sec translocase complex via SecD. Specifically interacts with transmembrane segments of nascent integral membrane proteins during membrane integration.

It is found in the cell inner membrane. Required for the insertion and/or proper folding and/or complex formation of integral membrane proteins into the membrane. Involved in integration of membrane proteins that insert both dependently and independently of the Sec translocase complex, as well as at least some lipoproteins. Aids folding of multispanning membrane proteins. This is Membrane protein insertase YidC from Burkholderia ambifaria (strain MC40-6).